We begin with the raw amino-acid sequence, 83 residues long: Large ribosomal subunit protein eL14 (83 aa).

Belongs to the eukaryotic ribosomal protein eL14 family.

This chain is Large ribosomal subunit protein eL14, found in Thermococcus onnurineus (strain NA1).